We begin with the raw amino-acid sequence, 397 residues long: F-box protein At4g11590 (397 aa).

Residues 24 to 70 (EKNFNDVPLDVAIEIFMRLPVKSVARFLLLSKFWAEIIRSRHFITSF) enclose the F-box domain.

Part of a SCF (ASK-cullin-F-box) protein ligase complex. Interacts with ASK16.

Its subcellular location is the nucleus. The protein operates within protein modification; protein ubiquitination. In terms of biological role, component of SCF(ASK-cullin-F-box) E3 ubiquitin ligase complexes, which may mediate the ubiquitination and subsequent proteasomal degradation of target proteins. In Arabidopsis thaliana (Mouse-ear cress), this protein is F-box protein At4g11590.